Consider the following 297-residue polypeptide: uncharacterized protein (297 aa).

This is an uncharacterized protein from Frog virus 3 (isolate Goorha) (FV-3).